The following is a 499-amino-acid chain: Bifunctional purine biosynthesis protein PurH (499 aa).

One can recognise an MGS-like domain in the interval 1 to 144 (MIKRALISVF…KNFKDVVVLT (144 aa)).

Belongs to the PurH family.

It catalyses the reaction (6R)-10-formyltetrahydrofolate + 5-amino-1-(5-phospho-beta-D-ribosyl)imidazole-4-carboxamide = 5-formamido-1-(5-phospho-D-ribosyl)imidazole-4-carboxamide + (6S)-5,6,7,8-tetrahydrofolate. It carries out the reaction IMP + H2O = 5-formamido-1-(5-phospho-D-ribosyl)imidazole-4-carboxamide. It functions in the pathway purine metabolism; IMP biosynthesis via de novo pathway; 5-formamido-1-(5-phospho-D-ribosyl)imidazole-4-carboxamide from 5-amino-1-(5-phospho-D-ribosyl)imidazole-4-carboxamide (10-formyl THF route): step 1/1. Its pathway is purine metabolism; IMP biosynthesis via de novo pathway; IMP from 5-formamido-1-(5-phospho-D-ribosyl)imidazole-4-carboxamide: step 1/1. The protein is Bifunctional purine biosynthesis protein PurH of Clostridium botulinum (strain 657 / Type Ba4).